A 406-amino-acid polypeptide reads, in one-letter code: Pygopus homolog 2 (406 aa).

Disordered regions lie at residues 1–73 (MAAS…DHLV) and 106–323 (VQGG…PQPP). Alanine 2 carries the post-translational modification N-acetylalanine. Serine 40 is subject to Phosphoserine. The Nuclear localization signal signature appears at 41–47 (PEKKRRK). 2 stretches are compositionally biased toward pro residues: residues 131–141 (RQPPPFPPNPM) and 149–158 (PQGPGYPPPG). Positions 164-179 (SQPFNQPLGQNFSPPS) are enriched in polar residues. The span at 236–252 (SLPPNTSPFPGPDPGFP) shows a compositional bias: pro residues. Positions 285–296 (NGNQPSFPPNSS) are enriched in polar residues. Threonine 302 is subject to Phosphothreonine. The PHD-type zinc-finger motif lies at 327 to 385 (VYPCGACRSEVNDDQDAILCEASCQKWFHRECTGMTESAYGLLTTEASAVWACDLCLKT).

In terms of assembly, binds to BCL9 via the PHD-type zinc finger motif, and thereby becomes part of the nuclear beta-catenin/TCF complex.

Its subcellular location is the nucleus. Involved in signal transduction through the Wnt pathway. This Homo sapiens (Human) protein is Pygopus homolog 2 (PYGO2).